A 272-amino-acid polypeptide reads, in one-letter code: MDHRTPTPDNPWLALRNLTPARIALGRTGTSLPTGAQLDFQFAHAQARDAVHLAFDHAGLASQLSDRGRDSLVLHSAASDRHQYLQRPDLGRRLNEDSIATLRQHTQANPGGVDLAIVVADGLSALAVHRHTLPFLNRFEEQAAADGWTSAPVVLVQQGRVAVADEVGELLGARMTVMLIGERPGLSSPDSLGLYFTYAPKVGLTDAYRNCISNIRLEGLSYGMAAHRLLYLMREACRRQLSGVNLKDEAEVHSLESEGSASQKGNFLLGKG.

Adenosylcob(III)alamin is bound by residues Val161, Glu182, and Cys211.

It belongs to the EutC family. In terms of assembly, the basic unit is a heterodimer which dimerizes to form tetramers. The heterotetramers trimerize; 6 large subunits form a core ring with 6 small subunits projecting outwards. It depends on adenosylcob(III)alamin as a cofactor.

Its subcellular location is the bacterial microcompartment. It carries out the reaction ethanolamine = acetaldehyde + NH4(+). Its pathway is amine and polyamine degradation; ethanolamine degradation. Its function is as follows. Catalyzes the deamination of various vicinal amino-alcohols to oxo compounds. Allows this organism to utilize ethanolamine as the sole source of nitrogen and carbon in the presence of external vitamin B12. This is Ethanolamine ammonia-lyase small subunit from Pseudomonas putida (strain GB-1).